A 127-amino-acid polypeptide reads, in one-letter code: Large ribosomal subunit protein bL12 (127 aa).

It belongs to the bacterial ribosomal protein bL12 family. As to quaternary structure, homodimer. Part of the ribosomal stalk of the 50S ribosomal subunit. Forms a multimeric L10(L12)X complex, where L10 forms an elongated spine to which 2 to 4 L12 dimers bind in a sequential fashion. Binds GTP-bound translation factors.

Forms part of the ribosomal stalk which helps the ribosome interact with GTP-bound translation factors. Is thus essential for accurate translation. The sequence is that of Large ribosomal subunit protein bL12 from Phytoplasma mali (strain AT).